Here is a 231-residue protein sequence, read N- to C-terminus: Ion-translocating oxidoreductase complex subunit E (231 aa).

The next 6 helical transmembrane spans lie at 18–38 (ALVQ…ATNA), 39–59 (LGLG…ISTL), 63–83 (TPAE…VSAV), 86–106 (LINA…PLIV), 125–145 (ALSA…MFVL), and 182–202 (PFLL…MLAG).

Belongs to the NqrDE/RnfAE family. The complex is composed of six subunits: RsxA, RsxB, RsxC, RsxD, RsxE and RsxG.

It is found in the cell inner membrane. In terms of biological role, part of a membrane-bound complex that couples electron transfer with translocation of ions across the membrane. Required to maintain the reduced state of SoxR. The chain is Ion-translocating oxidoreductase complex subunit E from Shigella boydii serotype 18 (strain CDC 3083-94 / BS512).